The chain runs to 745 residues: MSLITRLLTASSPLRLRAMETMSRAGYSSHAKYAEHRPIDKIRNIGISAHIDSGKTTLTERILFYTGRIVEMHEVRGKDNVGATMDSMELERQRGITIQSAATYTLWKDTNINIIDTPGHVDFTVEVERALRVLDGAVLVLCAVGGVQSQTLTVNRQMKRYNVPCLAFINKLDRMGSNPYRVLSQMRSKMNHNAAFIQLPIGVESNCKGIVDLVRERAIYFEGEHGMNLRLDEIPQDMRVESQERRQELIEHLSNADDTFGELFLEEKPFTEDDIKAALRRTCIKRTFTPVLVGTALKNKGVQPLLDAVLEYLPNPGEVENLAFVEKEGQDPEKIVLNPARDGKDAFVGLAFKLEAGRFGQLTYLRCYQGVLRKGDNIFNARTNKKVRIARLVRLHSNQMEDVNEVYAGDIFALFGVDCASGDTFTTNPKNNLAMESIFVPEPVVSMAIKPNNTKDRDNFSKAIARFTKEDPTFHFFFDNDVKETLVSGMGELHLEIYAQRMEREYGCPVTLGKPKVAFRETLVGPCEFDYLHKKQSGGSGQYARIIGIMEPLPPNQNTLLEFVDETVGTNVPKQFVPGVEKGYREMAEKGMLSGHKLSGIRFRLQDGGHHIVDSSELAFMLAAHGAIKEVFQNGNWQILEPIMLVEVTAPEEFQGAVMGHLSKRHGIITGTEGTEGWFTVYAEVPLNDMFGYAGELRSSTQGKGEFTMEYSRYSPCLPDVQDQIVRQYQESQGLGQADKKKRKN.

The transit peptide at 1–15 directs the protein to the mitochondrion; it reads MSLITRLLTASSPLR. Residues 40-317 form the tr-type G domain; it reads DKIRNIGISA…AVLEYLPNPG (278 aa). GTP-binding positions include 49-56, 116-120, and 170-173; these read AHIDSGKT, DTPGH, and NKLD.

Belongs to the TRAFAC class translation factor GTPase superfamily. Classic translation factor GTPase family. EF-G/EF-2 subfamily.

The protein localises to the mitochondrion. Its pathway is protein biosynthesis; polypeptide chain elongation. Its function is as follows. Mitochondrial GTPase that catalyzes the GTP-dependent ribosomal translocation step during translation elongation. During this step, the ribosome changes from the pre-translocational (PRE) to the post-translocational (POST) state as the newly formed A-site-bound peptidyl-tRNA and P-site-bound deacylated tRNA move to the P and E sites, respectively. Catalyzes the coordinated movement of the two tRNA molecules, the mRNA and conformational changes in the ribosome. Essential during development as it acts as a retrograde signal from mitochondria to the nucleus to slow down cell proliferation if mitochondrial energy output is low. The sequence is that of Elongation factor G, mitochondrial (ico) from Drosophila ananassae (Fruit fly).